A 388-amino-acid chain; its full sequence is Chorismate synthase (388 aa).

NADP(+) contacts are provided by arginine 39 and arginine 45. Residues 130-132 (RSS), 251-252 (NA), glycine 296, 311-315 (KPIPT), and arginine 337 contribute to the FMN site.

It belongs to the chorismate synthase family. In terms of assembly, homotetramer. FMNH2 serves as cofactor.

It catalyses the reaction 5-O-(1-carboxyvinyl)-3-phosphoshikimate = chorismate + phosphate. Its pathway is metabolic intermediate biosynthesis; chorismate biosynthesis; chorismate from D-erythrose 4-phosphate and phosphoenolpyruvate: step 7/7. Catalyzes the anti-1,4-elimination of the C-3 phosphate and the C-6 proR hydrogen from 5-enolpyruvylshikimate-3-phosphate (EPSP) to yield chorismate, which is the branch point compound that serves as the starting substrate for the three terminal pathways of aromatic amino acid biosynthesis. This reaction introduces a second double bond into the aromatic ring system. This chain is Chorismate synthase, found in Streptococcus pyogenes serotype M49 (strain NZ131).